The chain runs to 207 residues: 3-isopropylmalate dehydratase small subunit (207 aa).

Belongs to the LeuD family. LeuD type 1 subfamily. As to quaternary structure, heterodimer of LeuC and LeuD.

It carries out the reaction (2R,3S)-3-isopropylmalate = (2S)-2-isopropylmalate. The protein operates within amino-acid biosynthesis; L-leucine biosynthesis; L-leucine from 3-methyl-2-oxobutanoate: step 2/4. Its function is as follows. Catalyzes the isomerization between 2-isopropylmalate and 3-isopropylmalate, via the formation of 2-isopropylmaleate. This Gluconacetobacter diazotrophicus (strain ATCC 49037 / DSM 5601 / CCUG 37298 / CIP 103539 / LMG 7603 / PAl5) protein is 3-isopropylmalate dehydratase small subunit.